Consider the following 476-residue polypeptide: Cytosolic iron-sulfur assembly component 3 (476 aa).

Position 2 is an N-acetylalanine (Ala2). The [4Fe-4S] cluster site is built by Cys24, Cys71, Cys74, Cys77, Cys190, Cys246, Cys395, and Cys399.

This sequence belongs to the NARF family. External component of the CIA complex. In the CIA complex, interacts directly with CIAO1 and MMS19.

In terms of biological role, component of the cytosolic iron-sulfur protein assembly (CIA) complex, a multiprotein complex that mediates the incorporation of iron-sulfur cluster into extramitochondrial Fe/S proteins. Seems to negatively regulate the level of HIF1A expression, although this effect could be indirect. The sequence is that of Cytosolic iron-sulfur assembly component 3 from Pongo abelii (Sumatran orangutan).